Here is a 426-residue protein sequence, read N- to C-terminus: MLPSASRERPGYRAGVAAPDLLDPKSAAQNSKPRLSFSTKPTVLASRVESDTTINVMKWKTVSTIFLVVVLYLIIGATVFKALEQPHEISQRTTIVIQKQTFISQHSCVNSTELDELIQQIVAAINAGIIPLGNTSNQISHWDLGSSFFFAGTVITTIGFGNISPRTEGGKIFCIIYALLGIPLFGFLLAGVGDQLGTIFGKGIAKVEDTFIKWNVSQTKIRIISTIIFILFGCVLFVALPAIIFKHIEGWSALDAIYFVVITLTTIGFGDYVAGGSDIEYLDFYKPVVWFWILVGLAYFAAVLSMIGDWLRVISKKTKEEVGEFRAHAAEWTANVTAEFKETRRRLSVEIYDKFQRATSIKRKLSAELAGNHNQELTPCRRTLSVNHLTSERDVLPPLLKTESIYLNGLTPHCAGEEIAVIENIK.

The Cytoplasmic portion of the chain corresponds to 1–61 (MLPSASRERP…TTINVMKWKT (61 aa)). Important for GNG4 binding and L-glutamate release in astrocytes regions lie at residues 17-38 (AAPD…LSFS) and 51-61 (DTTINVMKWKT). A helical membrane pass occupies residues 62–82 (VSTIFLVVVLYLIIGATVFKA). N-linked (GlcNAc...) asparagine glycosylation is found at Asn110 and Asn134. Residues 144-170 (LGSSFFFAGTVITTIGFGNISPRTEGG) constitute an intramembrane region (pore-forming). K(+) is bound by residues Thr157, Ile158, Gly159, and Phe160. The selectivity filter 1 stretch occupies residues 157-162 (TIGFGN). The helical transmembrane segment at 172-192 (IFCIIYALLGIPLFGFLLAGV) threads the bilayer. Residues 193–223 (GDQLGTIFGKGIAKVEDTFIKWNVSQTKIRI) lie on the Cytoplasmic side of the membrane. The chain crosses the membrane as a helical span at residues 224-244 (ISTIIFILFGCVLFVALPAII). An intramembrane region (pore-forming) is located at residues 253-283 (ALDAIYFVVITLTTIGFGDYVAGGSDIEYLD). 4 residues coordinate K(+): Thr266, Ile267, Gly268, and Phe269. A selectivity filter 2 region spans residues 266–271 (TIGFGD). The helical transmembrane segment at 288–308 (VVWFWILVGLAYFAAVLSMIG) threads the bilayer. Topologically, residues 309-426 (DWLRVISKKT…EEIAVIENIK (118 aa)) are cytoplasmic. Positions 313-326 (VISKKTKEEVGEFR) are interaction with AKAP5. Positions 337-385 (TAEFKETRRRLSVEIYDKFQRATSIKRKLSAELAGNHNQELTPCRRTLS) are essential for chloroform and halothane sensitivity. Ser348 carries the phosphoserine; by PKA modification.

The protein belongs to the two pore domain potassium channel (TC 1.A.1.8) family. As to quaternary structure, homodimer; disulfide-linked. Forms heterodimers with other 2-pore domain K(+) channel subunits, such as KCNK1, KCNK4, KCNK10 and KCNK18. Interacts with AKAP5; the channel is recruited to postsynaptic microdomains by AKAP5 where it can integrate neurotransmitter receptor signals. Part of a complex composed of AKAP5 and ADRB2. Upon AKAP5 binding, the channel is no longer sensitive to intracellular acidification, membrane stretch or arachidonic acid stimuli. Interacts with POPDC1; the interaction enhances KCNK2 surface expression and is inhibited by cAMP. Interacts (via N-terminus) with G-protein subunit GNG4 (via C-terminus); this interaction confers ion selectivity to L-glutamate and Cl(-) anions. Post-translationally, phosphorylation at Ser-348 controls the reversible conversion from a leak channel to a voltage-dependent channel. As to expression, detected in kidney, adrenal gland and brain where it is preferentially expressed in the amygdala but not found in thalamus, hypothalamus, hippocampus or substantia nigra.

The protein localises to the cell membrane. Its subcellular location is the endoplasmic reticulum membrane. It localises to the cell projection. It is found in the axon. The protein resides in the dendrite. The protein localises to the postsynaptic density membrane. Its subcellular location is the sarcolemma. It catalyses the reaction K(+)(in) = K(+)(out). The catalysed reaction is L-glutamate(out) = L-glutamate(in). It carries out the reaction chloride(in) = chloride(out). The enzyme catalyses Rb(+)(in) = Rb(+)(out). It catalyses the reaction Cs(+)(in) = Cs(+)(out). Its activity is regulated as follows. Activated by various stimuli including intracellular acidic pH, mechanical stretch and polyunsaturated fatty acids such as arachidonic acid. Activated by volatile anesthetics such as chloroform, halothane, and isoflurane. Its function is as follows. K(+) channel that conducts voltage-dependent outward rectifying currents upon membrane depolarization. Voltage sensing is coupled to K(+) electrochemical gradient in an 'ion flux gating' mode where outward but not inward ion flow opens the gate. Converts to voltage-independent 'leak' conductance mode upon stimulation by various stimuli including mechanical membrane stretch, acidic pH, heat and lipids. Reversibly converts between a voltage-insensitive K(+) 'leak' channel and a voltage-dependent outward rectifying K(+) channel in a phosphorylation-dependent manner. Homo- and heterodimerizes to form functional channels with distinct regulatory and gating properties. In trigeminal ganglia sensory neurons, the heterodimer of KCNK2/TREK-1 and KCNK18/TRESK inhibits neuronal firing and neurogenic inflammation by stabilizing the resting membrane potential at K(+) equilibrium potential as well as by regulating the threshold of action potentials and the spike frequency. At trigeminal A-beta afferent nerves, the heterodimer of KCNK2/TREK-1 and KCNK4/TRAAK is mostly coexpressed at nodes of Ranvier where it conducts voltage-independent mechanosensitive and thermosensitive currents, allowing rapid action potential repolarization, high speed and high frequence saltatory conduction on myelinated nerves to ensure prompt sensory responses. In hippocampal astrocytes, the heterodimer of KCNK2/TREK-1 and KCNK1/TWIK-1 allows passive K(+) conductance under basal conditions, but changes ion selectivity and becomes permeable to L-glutamate and Cl(-) ions upon binding to G-protein subunit GNG4 in stimulated astrocytes. Mediates rapid L-glutamate release in response to activation of G-protein-coupled receptors, such as F2R and CNR1. In hippocampal pyramidal neurons, the homodimer of KCNK2/TREK-1 contributes to gamma-aminobutyric acid (GABA) B-induced slow inhibitory postsynaptic potential. Associates with AKAP5 and Gs-protein-coupled receptor B2AR at postsynaptic dense bodies and converts to a leak channel no longer sensitive to stimulation by arachidonic acid, acidic pH or mechanical stress, nor inhibited by Gq-coupled receptors but still under the negative control of Gs-coupled receptors. Permeable to other monovalent cations such as Rb(+) and Cs(+). In terms of biological role, does not display channel activity but reduces the channel activity of isoform 1 and isoform 2 and reduces cell surface expression of isoform 2. The sequence is that of Potassium channel subfamily K member 2 from Homo sapiens (Human).